Reading from the N-terminus, the 122-residue chain is uncharacterized protein (122 aa).

The protein resides in the mitochondrion. This is an uncharacterized protein from Claviceps purpurea (Ergot fungus).